The following is a 298-amino-acid chain: Nucleotide-binding protein MAV_3359 (298 aa).

Residue 18-25 (GLSGAGRG) coordinates ATP. 69–72 (DVRS) serves as a coordination point for GTP.

It belongs to the RapZ-like family.

Functionally, displays ATPase and GTPase activities. This chain is Nucleotide-binding protein MAV_3359, found in Mycobacterium avium (strain 104).